The sequence spans 505 residues: uncharacterized protein (505 aa).

Positions 1–52 are disordered; that stretch reads MVDGSIHVPVQSHEGQHDNSSSLNEEIQTSQDPLGIVESYQESSTSDFDKSH. The span at 18 to 32 shows a compositional bias: polar residues; the sequence is DNSSSLNEEIQTSQD. The next 10 helical transmembrane spans lie at 141 to 161, 173 to 193, 208 to 228, 235 to 255, 265 to 285, 290 to 310, 326 to 346, 362 to 382, 389 to 409, and 415 to 435; these read FWIV…TNTF, AFQT…YTVF, GWKY…VVLA, LSAS…SFIF, ILGV…DVIS, SAVN…CYGV, VVIG…TFIF, GYLA…PILF, FYNI…IHVF, and WLYP…HVFV. Residues Ser463, Ser466, and Ser467 each carry the phosphoserine modification.

This sequence belongs to the SLC35F solute transporter family.

The protein resides in the golgi apparatus membrane. This is an uncharacterized protein from Schizosaccharomyces pombe (strain 972 / ATCC 24843) (Fission yeast).